The following is a 231-amino-acid chain: Deoxyribose-phosphate aldolase (231 aa).

The Proton donor/acceptor role is filled by aspartate 97. Lysine 162 serves as the catalytic Schiff-base intermediate with acetaldehyde. Lysine 191 functions as the Proton donor/acceptor in the catalytic mechanism.

The protein belongs to the DeoC/FbaB aldolase family. DeoC type 1 subfamily.

It localises to the cytoplasm. The catalysed reaction is 2-deoxy-D-ribose 5-phosphate = D-glyceraldehyde 3-phosphate + acetaldehyde. The protein operates within carbohydrate degradation; 2-deoxy-D-ribose 1-phosphate degradation; D-glyceraldehyde 3-phosphate and acetaldehyde from 2-deoxy-alpha-D-ribose 1-phosphate: step 2/2. Catalyzes a reversible aldol reaction between acetaldehyde and D-glyceraldehyde 3-phosphate to generate 2-deoxy-D-ribose 5-phosphate. The polypeptide is Deoxyribose-phosphate aldolase (Caldanaerobacter subterraneus subsp. tengcongensis (strain DSM 15242 / JCM 11007 / NBRC 100824 / MB4) (Thermoanaerobacter tengcongensis)).